The sequence spans 353 residues: Methylthioribose-1-phosphate isomerase (353 aa).

Substrate-binding positions include 51–53, Arg94, and Gln203; that span reads RGA. Catalysis depends on Asp244, which acts as the Proton donor. Residue 254 to 255 coordinates substrate; that stretch reads NK.

It belongs to the eIF-2B alpha/beta/delta subunits family. MtnA subfamily.

It catalyses the reaction 5-(methylsulfanyl)-alpha-D-ribose 1-phosphate = 5-(methylsulfanyl)-D-ribulose 1-phosphate. The protein operates within amino-acid biosynthesis; L-methionine biosynthesis via salvage pathway; L-methionine from S-methyl-5-thio-alpha-D-ribose 1-phosphate: step 1/6. Its function is as follows. Catalyzes the interconversion of methylthioribose-1-phosphate (MTR-1-P) into methylthioribulose-1-phosphate (MTRu-1-P). This Trichodesmium erythraeum (strain IMS101) protein is Methylthioribose-1-phosphate isomerase.